The sequence spans 485 residues: Adenosylhomocysteinase (485 aa).

Residues threonine 64, aspartate 139, and glutamate 205 each contribute to the substrate site. 206–208 (TTT) is an NAD(+) binding site. Substrate contacts are provided by lysine 235 and aspartate 239. NAD(+)-binding positions include asparagine 240, 269 to 274 (GYGDVG), glutamate 292, asparagine 327, 348 to 350 (IGH), and asparagine 397.

The protein belongs to the adenosylhomocysteinase family. In terms of assembly, homotetramer. It depends on NAD(+) as a cofactor. As to expression, mainly in floral buds and stems.

It carries out the reaction S-adenosyl-L-homocysteine + H2O = L-homocysteine + adenosine. It functions in the pathway amino-acid biosynthesis; L-homocysteine biosynthesis; L-homocysteine from S-adenosyl-L-homocysteine: step 1/1. In terms of biological role, adenosylhomocysteine is a competitive inhibitor of S-adenosyl-L-methionine-dependent methyl transferase reactions; therefore adenosylhomocysteinase may play a key role in the control of methylations via regulation of the intracellular concentration of adenosylhomocysteine. The polypeptide is Adenosylhomocysteinase (SAHH) (Petroselinum crispum (Parsley)).